Here is a 643-residue protein sequence, read N- to C-terminus: Transmembrane protein 62 (643 aa).

A helical transmembrane segment spans residues valine 9–alanine 29. Asparagine 180 carries an N-linked (GlcNAc...) asparagine glycan. Transmembrane regions (helical) follow at residues isoleucine 431–phenylalanine 451, tyrosine 484–isoleucine 504, glycine 532–leucine 552, and isoleucine 572–phenylalanine 592.

Its subcellular location is the membrane. This Mus musculus (Mouse) protein is Transmembrane protein 62 (Tmem62).